A 185-amino-acid chain; its full sequence is Elongation factor P (185 aa).

Belongs to the elongation factor P family.

It localises to the cytoplasm. Its pathway is protein biosynthesis; polypeptide chain elongation. Functionally, involved in peptide bond synthesis. Stimulates efficient translation and peptide-bond synthesis on native or reconstituted 70S ribosomes in vitro. Probably functions indirectly by altering the affinity of the ribosome for aminoacyl-tRNA, thus increasing their reactivity as acceptors for peptidyl transferase. This is Elongation factor P from Petrotoga mobilis (strain DSM 10674 / SJ95).